Consider the following 370-residue polypeptide: NSFL1 cofactor p47 (370 aa).

The tract at residues 54 to 73 (SQATPSSVSRGTAPSDNRVT) is disordered. Phosphoserine is present on residues S74, S102, S114, and S140. 2 disordered regions span residues 80 to 116 (HDQDEEEEEEEGQRFYAGGSERSGQQIVGPPRKKSPN) and 138 to 157 (TKSPGETSKPRPFAGGGYRL). Residues 109-115 (PPRKKSP) carry the Nuclear localization signal motif. Y167 bears the Phosphotyrosine mark. The Nuclear localization signal signature appears at 172–175 (RRRH). 3 positions are modified to phosphoserine: S176, S192, and S272. The 66-residue stretch at 179–244 (DVHVVLKLWK…MEDHRDEDFV (66 aa)) folds into the SEP domain. Residues 291–368 (EAEPTTNIQI…NLLNAVIVQR (78 aa)) form the UBX domain.

Belongs to the NSFL1C family. As to quaternary structure, part of a ternary complex containing STX5A, NSFL1C and VCP. NSFL1C forms a homotrimer that binds to one end of a VCP homohexamer. The complex binds to membranes enriched in phosphatidylethanolamine-containing lipids and promotes Golgi membrane fusion. Interaction with VCIP135 leads to dissociation of the complex via ATP hydrolysis by VCP. Binds ubiquitin and mono-ubiquitinated proteins via its N-terminal UBA-like domain when bound to VCP. In terms of processing, phosphorylated during mitosis. Phosphorylation inhibits interaction with Golgi membranes and is required for the fragmentation of the Golgi stacks during mitosis.

It localises to the nucleus. It is found in the golgi apparatus. The protein resides in the golgi stack. Its subcellular location is the chromosome. The protein localises to the cytoplasm. It localises to the cytoskeleton. It is found in the microtubule organizing center. The protein resides in the centrosome. In terms of biological role, reduces the ATPase activity of VCP. Necessary for the fragmentation of Golgi stacks during mitosis and for VCP-mediated reassembly of Golgi stacks after mitosis. May play a role in VCP-mediated formation of transitional endoplasmic reticulum (tER). Inhibits the activity of CTSL (in vitro). Together with UBXN2B/p37, regulates the centrosomal levels of kinase AURKA/Aurora A during mitotic progression by promoting AURKA removal from centrosomes in prophase. Also, regulates spindle orientation during mitosis. The polypeptide is NSFL1 cofactor p47 (Nsfl1c) (Mus musculus (Mouse)).